A 291-amino-acid chain; its full sequence is 4-hydroxy-tetrahydrodipicolinate synthase (291 aa).

Thr45 contributes to the pyruvate binding site. Catalysis depends on Tyr133, which acts as the Proton donor/acceptor. The Schiff-base intermediate with substrate role is filled by Lys161. Ile203 provides a ligand contact to pyruvate.

This sequence belongs to the DapA family. Homotetramer; dimer of dimers.

It localises to the cytoplasm. It catalyses the reaction L-aspartate 4-semialdehyde + pyruvate = (2S,4S)-4-hydroxy-2,3,4,5-tetrahydrodipicolinate + H2O + H(+). It participates in amino-acid biosynthesis; L-lysine biosynthesis via DAP pathway; (S)-tetrahydrodipicolinate from L-aspartate: step 3/4. Its function is as follows. Catalyzes the condensation of (S)-aspartate-beta-semialdehyde [(S)-ASA] and pyruvate to 4-hydroxy-tetrahydrodipicolinate (HTPA). The polypeptide is 4-hydroxy-tetrahydrodipicolinate synthase (Neisseria gonorrhoeae (strain ATCC 700825 / FA 1090)).